The following is a 155-amino-acid chain: Small ribosomal subunit protein uS7c (155 aa).

It belongs to the universal ribosomal protein uS7 family. In terms of assembly, part of the 30S ribosomal subunit.

It localises to the plastid. The protein localises to the chloroplast. Functionally, one of the primary rRNA binding proteins, it binds directly to 16S rRNA where it nucleates assembly of the head domain of the 30S subunit. The polypeptide is Small ribosomal subunit protein uS7c (rps7) (Gunnera chilensis (Chilean rhubarb)).